The primary structure comprises 465 residues: L-cystine uptake protein TcyP (465 aa).

10 helical membrane passes run 3–23 (LFLTLLIIAIVLAVAGLLFYM), 34–54 (VLLALGAGVVYGLLLQFFFAP), 73–93 (YVRFLQMIVMPLIFISILSAF), 105–125 (ISALILGTLIATTAIAAAIGI), 184–204 (PTSAIGVVIFSAFLGVAYLGV), 224–246 (AIIMRVVTLILRLTPYGVLAIMT), 263–283 (FVLASYAALIVMFVIHLIILA), 338–358 (LSIGQNGCAGIYPAMLAVMIA), 370–390 (FILLLIVVIAISSFGVAGVGG), and 394–414 (FAAILVLSALDFPIALAGLLI).

It belongs to the dicarboxylate/amino acid:cation symporter (DAACS) (TC 2.A.23) family.

It is found in the membrane. Functionally, mediates uptake of L-cystine, the oxidized form of L-cysteine. This chain is L-cystine uptake protein TcyP, found in Shouchella clausii (strain KSM-K16) (Alkalihalobacillus clausii).